A 290-amino-acid chain; its full sequence is Inactive tau-tubulin kinase ttbk-6 (290 aa).

A Protein kinase domain is found at 1 to 240 (MEDHVLKKLN…FWQVMENEKI (240 aa)). Disordered regions lie at residues 244–263 (SKFD…AAWE) and 268–290 (RYFQ…DFVL).

This sequence belongs to the protein kinase superfamily. CK1 Ser/Thr protein kinase family.

The chain is Inactive tau-tubulin kinase ttbk-6 from Caenorhabditis elegans.